The following is a 334-amino-acid chain: Nucleoid-associated protein YPN_2714 (334 aa).

This sequence belongs to the YejK family.

It is found in the cytoplasm. The protein localises to the nucleoid. The protein is Nucleoid-associated protein YPN_2714 of Yersinia pestis bv. Antiqua (strain Nepal516).